Here is a 394-residue protein sequence, read N- to C-terminus: Elongation factor Tu (394 aa).

Residues 10-204 (KPHVNVGTIG…HLDSYIPEPE (195 aa)) enclose the tr-type G domain. The interval 19-26 (GHVDHGKT) is G1. 19–26 (GHVDHGKT) provides a ligand contact to GTP. Thr26 is a binding site for Mg(2+). The G2 stretch occupies residues 60-64 (GITIN). Residues 81-84 (DCPG) form a G3 region. Residues 81–85 (DCPGH) and 136–139 (NKCD) each bind GTP. The interval 136-139 (NKCD) is G4. The tract at residues 174 to 176 (SAL) is G5.

This sequence belongs to the TRAFAC class translation factor GTPase superfamily. Classic translation factor GTPase family. EF-Tu/EF-1A subfamily. As to quaternary structure, monomer.

The protein resides in the cytoplasm. It catalyses the reaction GTP + H2O = GDP + phosphate + H(+). Its function is as follows. GTP hydrolase that promotes the GTP-dependent binding of aminoacyl-tRNA to the A-site of ribosomes during protein biosynthesis. This chain is Elongation factor Tu, found in Haemophilus ducreyi (strain 35000HP / ATCC 700724).